A 466-amino-acid polypeptide reads, in one-letter code: uncharacterized protein (466 aa).

The disordered stretch occupies residues 1 to 22; that stretch reads MKKNNERVNTNPSLISKSYNMK. A compositionally biased stretch (polar residues) spans 7–19; it reads RVNTNPSLISKSY. 2 positions are modified to phosphoserine: serine 40 and serine 42. The 76-residue stretch at 108 to 183 folds into the RRM domain; the sequence is YFVHMDNISP…RLISATITNH (76 aa). Residues 186 to 207 form a disordered region; that stretch reads RLPNAEHLESSTKTKDESQDKD. Basic and acidic residues predominate over residues 188–207; that stretch reads PNAEHLESSTKTKDESQDKD. The CID domain occupies 209–368; it reads LTKLDRAKLE…RAWRNFSGNT (160 aa). At serine 371 the chain carries Phosphoserine. The span at 425–436 shows a compositional bias: low complexity; sequence STETSSSSSPQP. Residues 425–448 are disordered; it reads STETSSSSSPQPTEERKAKFKPSF.

It is found in the nucleus. The protein resides in the cytoplasm. This is an uncharacterized protein from Schizosaccharomyces pombe (strain 972 / ATCC 24843) (Fission yeast).